Consider the following 120-residue polypeptide: MAPSKDKKPKKAWSFTLDLTHPVEDGIFDSVNFEQFLKERIKVNGKTGNLGSIVHIGRLKSKITVSSEKKFSKRYLKYLTKKYLKKNNLRDWLRVVASDKETYELRYFQISQDDESESEE.

This sequence belongs to the eukaryotic ribosomal protein eL22 family.

In Xenopus tropicalis (Western clawed frog), this protein is Ribosomal protein eL22-like 1 (rpl22l1).